A 1170-amino-acid polypeptide reads, in one-letter code: NPC intracellular sterol transporter 1-related protein 1 (1170 aa).

Residues 1–19 form the signal peptide; that stretch reads MNVLWIIALVGQLMRLVQG. 8 cysteine pairs are disulfide-bonded: Cys-23-Cys-75, Cys-29-Cys-41, Cys-64-Cys-110, Cys-76-Cys-114, Cys-98-Cys-230, Cys-101-Cys-156, Cys-223-Cys-235, and Cys-232-Cys-239. N-linked (GlcNAc...) asparagine glycosylation is found at Asn-123, Asn-145, and Asn-178. A helical transmembrane segment spans residues 260-280; the sequence is LSVLIFYTICALFAFMWYYLC. Asn-314 carries N-linked (GlcNAc...) asparagine glycosylation. A helical membrane pass occupies residues 341 to 361; that stretch reads ILITTVFSIFVFSFIIFQYAT. The N-linked (GlcNAc...) asparagine glycan is linked to Asn-401. 2 disulfide bridges follow: Cys-438/Cys-447 and Cys-473/Cys-480. Asn-513 is a glycosylation site (N-linked (GlcNAc...) asparagine). Helical transmembrane passes span 556-576, 585-605, 616-636, 667-687, 698-718, and 752-772; these read NDIS…TWAL, LLLG…AAGF, IIAE…IFLI, ILMS…VTMP, VSVI…LSLY, and IIII…EIQF. In terms of domain architecture, SSD spans 557–717; that stretch reads DISTVAISYL…LTAYVSILSL (161 aa). 4 cysteine pairs are disulfide-bonded: Cys-822–Cys-828, Cys-868–Cys-925, Cys-869–Cys-891, and Cys-879–Cys-888. N-linked (GlcNAc...) asparagine glycosylation is found at Asn-900 and Asn-940. 5 consecutive transmembrane segments (helical) span residues 1000 to 1020, 1027 to 1047, 1054 to 1074, 1099 to 1119, and 1133 to 1153; these read LTLK…SVFL, FLLA…MALL, VSLV…VHIV, IGES…CVLA, and MWFT…PALL.

It belongs to the patched family.

The protein localises to the vacuole membrane. In terms of biological role, involved in sphingolipid trafficking. May recycle sphingolipids between cellular membranous compartments. This Saccharomyces cerevisiae (strain ATCC 204508 / S288c) (Baker's yeast) protein is NPC intracellular sterol transporter 1-related protein 1.